We begin with the raw amino-acid sequence, 200 residues long: Interferon lambda-1 (200 aa).

The signal sequence occupies residues 1-19; the sequence is MAAAWTVVLVTLVLGLAVA. The N-linked (GlcNAc...) asparagine glycan is linked to asparagine 65. Cysteine 68 and cysteine 164 are disulfide-bonded.

Belongs to the lambda interferon family.

The protein localises to the secreted. Functionally, cytokine with antiviral, antitumour and immunomodulatory activities. Plays a critical role in the antiviral host defense, predominantly in the epithelial tissues. Acts as a ligand for the heterodimeric class II cytokine receptor composed of IL10RB and IFNLR1, and receptor engagement leads to the activation of the JAK/STAT signaling pathway resulting in the expression of IFN-stimulated genes (ISG), which mediate the antiviral state. Has a restricted receptor distribution and therefore restricted targets: is primarily active in epithelial cells and this cell type-selective action is because of the epithelial cell-specific expression of its receptor IFNLR1. Exerts an immunomodulatory effect by up-regulating MHC class I antigen expression. The chain is Interferon lambda-1 (IFNL1) from Homo sapiens (Human).